A 280-amino-acid chain; its full sequence is uncharacterized protein (280 aa).

Transmembrane regions (helical) follow at residues 10–29, 164–186, and 209–228; these read IQQN…LLFN, FVFV…FAFI, and IFGL…YFLL.

The protein resides in the cell membrane. This is an uncharacterized protein from Bacillus subtilis (strain 168).